Reading from the N-terminus, the 412-residue chain is Propionate kinase (412 aa).

It belongs to the acetokinase family. PduW subfamily.

It is found in the cytoplasm. It carries out the reaction propanoate + ATP = propanoyl phosphate + ADP. Its pathway is polyol metabolism; 1,2-propanediol degradation. Its function is as follows. Works with phosphate acetyltransferase (pta) to capture exogenous propionate and regenerate propionyl-CoA during degradation of 1,2-propanediol (1,2-PD). In Yersinia enterocolitica serotype O:8 / biotype 1B (strain NCTC 13174 / 8081), this protein is Propionate kinase.